A 387-amino-acid chain; its full sequence is Alanine racemase (387 aa).

Residue Lys-38 is the Proton acceptor; specific for D-alanine of the active site. Lys-38 is modified (N6-(pyridoxal phosphate)lysine). Residue Arg-136 participates in substrate binding. Tyr-267 acts as the Proton acceptor; specific for L-alanine in catalysis. Met-315 serves as a coordination point for substrate.

It belongs to the alanine racemase family. The cofactor is pyridoxal 5'-phosphate.

It catalyses the reaction L-alanine = D-alanine. The protein operates within amino-acid biosynthesis; D-alanine biosynthesis; D-alanine from L-alanine: step 1/1. Functionally, catalyzes the interconversion of L-alanine and D-alanine. May also act on other amino acids. This is Alanine racemase (alr) from Clostridium novyi (strain NT).